Consider the following 205-residue polypeptide: Urease accessory protein UreE (205 aa).

Basic and acidic residues predominate over residues 170 to 192 (EHHGHSHSHSHDHDHDHDHDHQH). The tract at residues 170–205 (EHHGHSHSHSHDHDHDHDHDHQHGPCCSHGHHHGHR) is disordered.

Belongs to the UreE family.

It localises to the cytoplasm. In terms of biological role, involved in urease metallocenter assembly. Binds nickel. Probably functions as a nickel donor during metallocenter assembly. The polypeptide is Urease accessory protein UreE (Burkholderia pseudomallei (strain 668)).